Consider the following 557-residue polypeptide: Dihydroxy-acid dehydratase (557 aa).

Position 50 (cysteine 50) interacts with [2Fe-2S] cluster. Residue aspartate 82 participates in Mg(2+) binding. [2Fe-2S] cluster is bound at residue cysteine 123. Mg(2+) is bound by residues aspartate 124 and lysine 125. An N6-carboxylysine modification is found at lysine 125. Residue cysteine 195 coordinates [2Fe-2S] cluster. Residue glutamate 447 coordinates Mg(2+). Serine 473 functions as the Proton acceptor in the catalytic mechanism.

It belongs to the IlvD/Edd family. In terms of assembly, homodimer. [2Fe-2S] cluster serves as cofactor. The cofactor is Mg(2+).

The enzyme catalyses (2R)-2,3-dihydroxy-3-methylbutanoate = 3-methyl-2-oxobutanoate + H2O. It carries out the reaction (2R,3R)-2,3-dihydroxy-3-methylpentanoate = (S)-3-methyl-2-oxopentanoate + H2O. Its pathway is amino-acid biosynthesis; L-isoleucine biosynthesis; L-isoleucine from 2-oxobutanoate: step 3/4. It functions in the pathway amino-acid biosynthesis; L-valine biosynthesis; L-valine from pyruvate: step 3/4. Its function is as follows. Functions in the biosynthesis of branched-chain amino acids. Catalyzes the dehydration of (2R,3R)-2,3-dihydroxy-3-methylpentanoate (2,3-dihydroxy-3-methylvalerate) into 2-oxo-3-methylpentanoate (2-oxo-3-methylvalerate) and of (2R)-2,3-dihydroxy-3-methylbutanoate (2,3-dihydroxyisovalerate) into 2-oxo-3-methylbutanoate (2-oxoisovalerate), the penultimate precursor to L-isoleucine and L-valine, respectively. This is Dihydroxy-acid dehydratase from Nitrosomonas eutropha (strain DSM 101675 / C91 / Nm57).